Here is a 247-residue protein sequence, read N- to C-terminus: tRNA pseudouridine synthase A 1 (247 aa).

The active-site Nucleophile is the Asp53. Tyr111 contacts substrate.

Belongs to the tRNA pseudouridine synthase TruA family. As to quaternary structure, homodimer.

The enzyme catalyses uridine(38/39/40) in tRNA = pseudouridine(38/39/40) in tRNA. Formation of pseudouridine at positions 38, 39 and 40 in the anticodon stem and loop of transfer RNAs. The chain is tRNA pseudouridine synthase A 1 from Bacillus cereus (strain ATCC 14579 / DSM 31 / CCUG 7414 / JCM 2152 / NBRC 15305 / NCIMB 9373 / NCTC 2599 / NRRL B-3711).